A 325-amino-acid chain; its full sequence is MNMNKLVKSSVATSMALLLLSNTANAEGKITPVSVKKVDDKVTLYKTTATADSDKFKISQILTFNFIKDKSYDKDTLVLKAAGNINSGYERPNPKDYDFSKIYWGAKYNVSISSQSNDSVNVVDYAPKNQNEEFQVQNTLGYTFGGDISISNGLSGGLNGNTAFSETINYKQESYRTTLSRNTNYKNVGWGVEAHKIMNNGWGPYGRDSFHPTYGNELFLAGRQSSAYAGQNFIAQHQMPLLSRSNFNPEFLSVLSHRQDGAKKSKITVTYQREMDLYQIRWNGFYWAGANYKNFKTRTFKSTYEIDWENHKVKLLDTKETENNK.

Positions methionine 1–asparagine 25 are cleaved as a signal peptide.

The protein belongs to the aerolysin family. As to quaternary structure, toxicity requires sequential binding and synergistic association of a class S and a class F component which form heterooligomeric complexes. HlgB (class F) associates with either hlgA thus forming an AB toxin or with hlgC thus forming a CB toxin. Interacts with host AMFR.

Toxin that seems to act by forming pores in the membrane of the cell. Has a hemolytic and a leucotoxic activity. Promotes host AMFR-mediated inflammation by mediating 'Lys-27'-linked ubiquitination of TAB3, TAK1-TAB3 complex formation and phosphorylation of TAK1/MAP3K7. In turn, activates host NF-kappa-B signaling pathway. The sequence is that of Gamma-hemolysin component B (hlgB) from Staphylococcus aureus (strain MRSA252).